The sequence spans 124 residues: Small ribosomal subunit protein uS12 (124 aa).

Residue Asp89 is modified to 3-methylthioaspartic acid. The segment at 103-124 (DTAGVKDRRQSRSKYGAKSPKE) is disordered.

The protein belongs to the universal ribosomal protein uS12 family. In terms of assembly, part of the 30S ribosomal subunit. Contacts proteins S8 and S17. May interact with IF1 in the 30S initiation complex.

In terms of biological role, with S4 and S5 plays an important role in translational accuracy. Its function is as follows. Interacts with and stabilizes bases of the 16S rRNA that are involved in tRNA selection in the A site and with the mRNA backbone. Located at the interface of the 30S and 50S subunits, it traverses the body of the 30S subunit contacting proteins on the other side and probably holding the rRNA structure together. The combined cluster of proteins S8, S12 and S17 appears to hold together the shoulder and platform of the 30S subunit. This chain is Small ribosomal subunit protein uS12, found in Prochlorococcus marinus (strain NATL2A).